Reading from the N-terminus, the 301-residue chain is Pseudouridine-5'-phosphate glycosidase (301 aa).

Residue Glu-23 is the Proton donor of the active site. Residues Lys-84 and Val-104 each contribute to the substrate site. A Mn(2+)-binding site is contributed by Asp-136. Ser-138–Asp-140 provides a ligand contact to substrate. The active-site Nucleophile is the Lys-157.

The protein belongs to the pseudouridine-5'-phosphate glycosidase family. Homotrimer. Requires Mn(2+) as cofactor.

The enzyme catalyses D-ribose 5-phosphate + uracil = psi-UMP + H2O. Catalyzes the reversible cleavage of pseudouridine 5'-phosphate (PsiMP) to ribose 5-phosphate and uracil. Functions biologically in the cleavage direction, as part of a pseudouridine degradation pathway. This is Pseudouridine-5'-phosphate glycosidase from Mycoplasmopsis agalactiae (strain NCTC 10123 / CIP 59.7 / PG2) (Mycoplasma agalactiae).